A 183-amino-acid polypeptide reads, in one-letter code: Putative 3-methyladenine DNA glycosylase (183 aa).

It belongs to the DNA glycosylase MPG family.

This chain is Putative 3-methyladenine DNA glycosylase, found in Legionella pneumophila (strain Corby).